The sequence spans 799 residues: Zinc finger X-linked protein ZXDA (799 aa).

Positions 1-89 (MEIPKLLPAR…QPSGGGDDFF (89 aa)) are disordered. Residues 13 to 26 (LQGGGGGGIPAGGG) show a composition bias toward gly residues. C2H2-type zinc fingers lie at residues 267 to 291 (YLCP…LLTH), 300 to 324 (FKCP…LQSH), 330 to 354 (FGCP…MKGH), 360 to 382 (FKCE…QRSH), 389 to 413 (YQCA…NRAH), 420 to 444 (FSCS…LRSH), 450 to 474 (FLCD…KRKH), 480 to 504 (FMCP…SITH), 510 to 534 (FVCP…SKKH), and 543 to 568 (SRCP…VKRH). Residues 267 to 573 (YLCPEALCGQ…MVKRHKVGQD (307 aa)) form a required for interaction with ZXDC region. Residues 572-699 (QDLLAQLEAA…NMDEVSSVSV (128 aa)) are required for transcriptional activation.

It belongs to the ZXD family. As to quaternary structure, self-associates. Interacts with ZXDC and CIITA. In terms of tissue distribution, may be expressed in brain, heart, kidney, liver, lung, muscle and placenta.

The protein resides in the nucleus. Functionally, cooperates with CIITA to promote transcription of MHC class I and MHC class II genes. In Homo sapiens (Human), this protein is Zinc finger X-linked protein ZXDA (ZXDA).